The sequence spans 210 residues: Glutathione S-transferase P (210 aa).

A GST N-terminal domain is found at 2-81 (PPYTIVYFPV…HLGRSLGLYG (80 aa)). Phosphotyrosine; by EGFR is present on tyrosine 4. Glutathione is bound by residues tyrosine 8, arginine 14, tryptophan 39, lysine 45, 52-53 (QL), and 65-66 (QS). One can recognise a GST C-terminal domain in the interval 83 to 204 (DQKEAALVDM…SSPDHVNRPI (122 aa)). Lysine 103 and lysine 116 each carry N6-succinyllysine. Position 128 is an N6-acetyllysine (lysine 128).

This sequence belongs to the GST superfamily. Pi family. As to quaternary structure, homodimer. Interacts with CDK5.

The protein localises to the cytoplasm. It is found in the mitochondrion. It localises to the nucleus. The enzyme catalyses RX + glutathione = an S-substituted glutathione + a halide anion + H(+). It catalyses the reaction prostaglandin J2 + glutathione = prostaglandin J2-S-(R)-glutathione. It carries out the reaction prostaglandin J2 + glutathione = prostaglandin J2-S-(S)-glutathione. The catalysed reaction is prostaglandin A2 + glutathione = prostaglandin A2-S-(S)-glutathione. The enzyme catalyses 11(S)-hydroxy-14(S),15(S)-epoxy-(5Z,8Z,12E)-eicosatrienoate + glutathione = (11S,15S)-dihydroxy-14(R)-S-glutathionyl-(5Z,8Z,12E)-eicosatrienoate. Its function is as follows. Conjugation of reduced glutathione to a wide number of exogenous and endogenous hydrophobic electrophiles. Involved in the formation of glutathione conjugates of both prostaglandin A2 (PGA2) and prostaglandin J2 (PGJ2). Participates in the formation of novel hepoxilin regioisomers. Negatively regulates CDK5 activity via p25/p35 translocation to prevent neurodegeneration. This Mesocricetus auratus (Golden hamster) protein is Glutathione S-transferase P (GSTP1).